Consider the following 352-residue polypeptide: DNA polymerase IV (352 aa).

The UmuC domain maps to 7–187; the sequence is IIHIDMDCFY…LSLKKIPGIG (181 aa). Mg(2+) contacts are provided by aspartate 11 and aspartate 105. The active site involves glutamate 106.

This sequence belongs to the DNA polymerase type-Y family. As to quaternary structure, monomer. It depends on Mg(2+) as a cofactor.

The protein resides in the cytoplasm. The enzyme catalyses DNA(n) + a 2'-deoxyribonucleoside 5'-triphosphate = DNA(n+1) + diphosphate. Functionally, poorly processive, error-prone DNA polymerase involved in untargeted mutagenesis. Copies undamaged DNA at stalled replication forks, which arise in vivo from mismatched or misaligned primer ends. These misaligned primers can be extended by PolIV. Exhibits no 3'-5' exonuclease (proofreading) activity. May be involved in translesional synthesis, in conjunction with the beta clamp from PolIII. This is DNA polymerase IV from Colwellia psychrerythraea (strain 34H / ATCC BAA-681) (Vibrio psychroerythus).